A 251-amino-acid polypeptide reads, in one-letter code: MMKFIGIIPARYASTRFPGKPLADMNGKPMIQRVYEQVKDVLDSVCVATDDIRIENAVKAFGGQVVMTSDQHRSGTDRCYEAYQKIGEGYDVIVNIQGDEPFIHPEQIQTIKTCFADANTQIATLVKPFRSDDDFESSLFNPNSPKVVLNKNNEAMYFSRSIIPYIRGKKYTEWLPSHTFYKHIGLYAYRAQVLKEITQLPQSALELAESLEQLRWLENGYKIKVGITEQETIGIDTPEDMEKALAFLANR.

This sequence belongs to the KdsB family.

The protein resides in the cytoplasm. The catalysed reaction is 3-deoxy-alpha-D-manno-oct-2-ulosonate + CTP = CMP-3-deoxy-beta-D-manno-octulosonate + diphosphate. Its pathway is nucleotide-sugar biosynthesis; CMP-3-deoxy-D-manno-octulosonate biosynthesis; CMP-3-deoxy-D-manno-octulosonate from 3-deoxy-D-manno-octulosonate and CTP: step 1/1. It participates in bacterial outer membrane biogenesis; lipopolysaccharide biosynthesis. Activates KDO (a required 8-carbon sugar) for incorporation into bacterial lipopolysaccharide in Gram-negative bacteria. The polypeptide is 3-deoxy-manno-octulosonate cytidylyltransferase (Parabacteroides distasonis (strain ATCC 8503 / DSM 20701 / CIP 104284 / JCM 5825 / NCTC 11152)).